We begin with the raw amino-acid sequence, 209 residues long: Ribosome maturation factor RimP (209 aa).

It belongs to the RimP family.

It localises to the cytoplasm. In terms of biological role, required for maturation of 30S ribosomal subunits. The chain is Ribosome maturation factor RimP from Bartonella bacilliformis (strain ATCC 35685 / KC583 / Herrer 020/F12,63).